We begin with the raw amino-acid sequence, 190 residues long: Carbonic anhydrase 2 (190 aa).

This sequence belongs to the beta-class carbonic anhydrase family. In terms of assembly, homohexamer.

The protein resides in the cytoplasm. It carries out the reaction hydrogencarbonate + H(+) = CO2 + H2O. Reversible hydration of carbon dioxide. In Flaveria linearis (Narrowleaf yellowtops), this protein is Carbonic anhydrase 2.